Here is a 677-residue protein sequence, read N- to C-terminus: MKKRLIQVMIMFTLLLTMAFSADAADSSYYDEDYRPQYHFTPEANWMNDPNGMVYYAGEYHLFYQYHPYGLQWGPMHWGHAVSKDLVTWEHLPVALYPDEKGTIFSGSAVVDKNNTSGFQTGKEKPLVAIYTQDREGHQVQSIAYSNDKGRTWTKYAGNPVIPNPGKKDFRDPKVFWYEKEKKWVMVLAAGDRILIYTSKNLKQWTYASEFGQDQGSHGGVWECPDLFELPVDGNPNQKKWVMQVSVGNGAVSGGSGMQYFVGDFDGTHFKNENPPNKVLWTDYGRDFYAAVSWSDIPSTDSRRLWLGWMSNWQYANDVPTSPWRSATSIPRELKLKAFTEGVRVVQTPVKELETIRGTSKKWKNLTISPASHNVLAGQSGDAYEINAEFKVSPGSAAEFGFKVRTGENQFTKVGYDRRNAKLFVDRSESGNDTFNPAFNTGKETAPLKPVNGKVKLRIFVDRSSVEVFGNDGKQVITDIILPDRSSKGLELYAANGGVKVKSLTIHPLKKVWGTTPFMSNMTGWTTVNGTWADTIEGKQGRSDGDSFILSSASGSDFTYESDITIKDGNGRGAGALMFRSDKDAKNGYLANVDAKHDLVKFFKFENGAASVIAEYKTPIDVNKKYHLKTEAEGDRFKIYLDDRLVIDAHDSVFSEGQFGLNVWDATAVFQNVTKES.

An N-terminal signal peptide occupies residues 1–24; the sequence is MKKRLIQVMIMFTLLLTMAFSADA. Substrate-binding positions include 46 to 49, glutamine 65, tryptophan 73, 105 to 106, 171 to 172, glutamate 223, and tryptophan 313; these read WMND, FS, and RD. Aspartate 49 is a catalytic residue.

Belongs to the glycosyl hydrolase 32 family.

The protein resides in the secreted. The enzyme catalyses Hydrolysis of terminal, non-reducing (2-&gt;1)- and (2-&gt;6)-linked beta-D-fructofuranose residues in fructans.. Its activity is regulated as follows. Is completely inhibited by Ag(+) and Hg(2+) ions. Its function is as follows. Exo-fructosidase that can hydrolyze both levan and inulin, leading to the production of free fructose. Is also able to hydrolyze sucrose and to a small extent raffinose, but not melezitose, stachylose, cellobiose, maltose, and lactose. The sequence is that of Levanase (sacC) from Bacillus subtilis (strain 168).